The chain runs to 554 residues: Hyaluronan synthase 3 (554 aa).

Residues 1-15 (MPVQLTTALRVVGTS) lie on the Cytoplasmic side of the membrane. Residues 16 to 36 (LFALVVLGGILAAYVTGYQFI) form a helical membrane-spanning segment. Residues 37–44 (HTEKHYLS) lie on the Extracellular side of the membrane. A helical transmembrane segment spans residues 45–65 (FGLYGAILGLHLLIQSLFAFL). Over 66-378 (EHRRMRRAGR…NSLWFHKHHL (313 aa)) the chain is Cytoplasmic. The helical transmembrane segment at 379 to 399 (WMTYESVVTGFFPFFLIATVI) threads the bilayer. The Extracellular portion of the chain corresponds to 400–409 (QLFYRGRIWN). Residues 410–430 (ILLFLLTVQLVGIIKATYACF) form a helical membrane-spanning segment. The Cytoplasmic portion of the chain corresponds to 431–441 (LRGNAEMIFMS). Residues 442–462 (LYSLLYMSSLLPAKIFAIATI) form a helical membrane-spanning segment. Asn-463 is a glycosylation site (N-linked (GlcNAc...) asparagine). The Extracellular portion of the chain corresponds to 463-474 (NKSGWGTSGRKT). Residues 475–495 (IVVNFIGLIPVSIWVAVLLGG) traverse the membrane as a helical segment. The Cytoplasmic segment spans residues 496–516 (LAYTAYCQDLFSETELAFLVS). Residues 517-537 (GAILYGCYWVALLMLYLAIIA) form a helical membrane-spanning segment. At 538–554 (RRCGKKPEQYSLAFAEV) the chain is on the extracellular side.

The protein belongs to the NodC/HAS family. It depends on Mg(2+) as a cofactor. Post-translationally, O-GlcNAcylation increases the hyaluronan synthase activity, HAS3 stability and its plasma membrane residence. The concentration of UDP-GlcNAc controls the level of O-GlcNAc modification.

The protein localises to the cell membrane. It is found in the golgi apparatus membrane. Its subcellular location is the golgi apparatus. It localises to the trans-Golgi network membrane. The protein resides in the cytoplasmic vesicle. The enzyme catalyses [hyaluronan](n) + UDP-N-acetyl-alpha-D-glucosamine = N-acetyl-beta-D-glucosaminyl-(1-&gt;4)-[hyaluronan](n) + UDP + H(+). It carries out the reaction N-acetyl-beta-D-glucosaminyl-(1-&gt;4)-[hyaluronan](n) + UDP-alpha-D-glucuronate = [hyaluronan](n+1) + UDP + H(+). It participates in glycan biosynthesis; hyaluronan biosynthesis. Functionally, catalyzes the addition of GlcNAc or GlcUA monosaccharides to the nascent hyaluronan polymer. Therefore, it is essential to hyaluronan synthesis a major component of most extracellular matrices that has a structural role in tissues architectures and regulates cell adhesion, migration and differentiation. This is one of three isoenzymes responsible for cellular hyaluronan synthesis. This chain is Hyaluronan synthase 3 (Has3), found in Mus musculus (Mouse).